Here is a 292-residue protein sequence, read N- to C-terminus: MIIDGKRIAEEIQLEIKELIQQSLCRPPCLAVLIVGSHPASQIYVNRKTAACKAVGIASIKCELPFTISEEELIREVEKLNVDPQIDGILVQLPLPPHINSNRVNYHIDPQKDVDGFHPLNVGKMLIGELDGFLPCTPFGIKTLLERTGIEVCGKHALIIGRSNIVGKPMAALLMQSYPGGNATVTVAHRYTKNLKELCLQADLIIVAIGQPKLITADMVKEGVIIVDVGINKIHDSSKKNGYQIVGDVDFVNVAPKCAFITPVPGGVGPMTIAMLLYNTLLSYSKSQNLNL.

Residues 161 to 163 (GRS) and Ile231 contribute to the NADP(+) site.

This sequence belongs to the tetrahydrofolate dehydrogenase/cyclohydrolase family. In terms of assembly, homodimer.

It catalyses the reaction (6R)-5,10-methylene-5,6,7,8-tetrahydrofolate + NADP(+) = (6R)-5,10-methenyltetrahydrofolate + NADPH. The enzyme catalyses (6R)-5,10-methenyltetrahydrofolate + H2O = (6R)-10-formyltetrahydrofolate + H(+). Its pathway is one-carbon metabolism; tetrahydrofolate interconversion. In terms of biological role, catalyzes the oxidation of 5,10-methylenetetrahydrofolate to 5,10-methenyltetrahydrofolate and then the hydrolysis of 5,10-methenyltetrahydrofolate to 10-formyltetrahydrofolate. The polypeptide is Bifunctional protein FolD (Protochlamydia amoebophila (strain UWE25)).